We begin with the raw amino-acid sequence, 781 residues long: Protein translocase subunit SecA 2 (781 aa).

ATP-binding positions include Q85, 103–107 (GEGKT), and D491.

This sequence belongs to the SecA family. Monomer and homodimer. Part of the essential Sec protein translocation apparatus which comprises SecA, SecYEG and auxiliary proteins SecDF. Other proteins may also be involved.

The protein resides in the cell membrane. The protein localises to the cytoplasm. It catalyses the reaction ATP + H2O + cellular proteinSide 1 = ADP + phosphate + cellular proteinSide 2.. Functionally, part of the Sec protein translocase complex. Interacts with the SecYEG preprotein conducting channel. Has a central role in coupling the hydrolysis of ATP to the transfer of proteins into and across the cell membrane, serving as an ATP-driven molecular motor driving the stepwise translocation of polypeptide chains across the membrane. In Clostridioides difficile (strain 630) (Peptoclostridium difficile), this protein is Protein translocase subunit SecA 2.